A 1412-amino-acid chain; its full sequence is Probable phosphatidylinositol 4-kinase STT4 homolog (1412 aa).

In terms of domain architecture, PIK helical spans 878-1055; sequence SMETNGFYRF…GTFVRCIEEI (178 aa). The tract at residues 1056–1163 is pleckstrin homology (PH) domain conferring phosphoinositide binding specificity; it reads MKEMPDGSRD…ISIKQLIFKS (108 aa). Positions 1127 to 1396 constitute a PI3K/PI4K catalytic domain; that stretch reads NGSARALQSH…LIAESSQKFR (270 aa). The segment at 1133–1139 is G-loop; that stretch reads LQSHSKV. The interval 1266 to 1274 is catalytic loop; sequence NIKDRHNGN. The activation loop stretch occupies residues 1285-1308; that stretch reads HIDFGYMLEMSPGNLNIEAPLKLT.

The protein belongs to the PI3/PI4-kinase family. Type III PI4K subfamily.

It localises to the cytoplasm. It carries out the reaction a 1,2-diacyl-sn-glycero-3-phospho-(1D-myo-inositol) + ATP = a 1,2-diacyl-sn-glycero-3-phospho-(1D-myo-inositol 4-phosphate) + ADP + H(+). Functionally, acts on phosphatidylinositol (PI) in the first committed step in the production of the second messenger inositol 1,4,5,-trisphosphate. The protein is Probable phosphatidylinositol 4-kinase STT4 homolog (STT4) of Encephalitozoon cuniculi (strain GB-M1) (Microsporidian parasite).